The primary structure comprises 564 residues: Ribulokinase (564 aa).

Belongs to the ribulokinase family.

The enzyme catalyses D-ribulose + ATP = D-ribulose 5-phosphate + ADP + H(+). It catalyses the reaction L-ribulose + ATP = L-ribulose 5-phosphate + ADP + H(+). Its pathway is carbohydrate degradation; L-arabinose degradation via L-ribulose; D-xylulose 5-phosphate from L-arabinose (bacterial route): step 2/3. The protein is Ribulokinase of Anoxybacillus flavithermus (strain DSM 21510 / WK1).